The following is a 373-amino-acid chain: C-C chemokine receptor type 2 (373 aa).

Residues 1–55 (MEDNNMLPQFIHGILSTSHSLFTRSIQELDEGATTPYDYDDGEPCHKTSVKQIGA) are Extracellular-facing. A helical transmembrane segment spans residues 56 to 83 (WILPPLYSLVFIFGFVGNMLVIIILIGC). Topologically, residues 84–93 (KKLKSMTDIY) are cytoplasmic. Residues 94–114 (LLNLAISDLLFLLTLPFWAHY) traverse the membrane as a helical segment. At 115–127 (AANEWVFGNIMCK) the chain is on the extracellular side. Cysteine 126 and cysteine 203 are oxidised to a cystine. A helical membrane pass occupies residues 128-149 (VFTGLYHIGYFGGIFFIILLTI). The Cytoplasmic segment spans residues 150 to 166 (DRYLAIVHAVFALKART). The residue at position 152 (tyrosine 152) is a Phosphotyrosine; by JAK2. The helical transmembrane segment at 167 to 191 (VTFGVITSVVTWVVAVFASLPGIIF) threads the bilayer. The Extracellular portion of the chain corresponds to 192–219 (TKSKQDDHHYTCGPYFTQLWKNFQTIMR). Residues 220 to 239 (NILSLILPLLVMVICYSGIL) form a helical membrane-spanning segment. Topologically, residues 240-256 (HTLFRCRNEKKRHRAVR) are cytoplasmic. The helical transmembrane segment at 257–281 (LIFAIMIVYFLFWTPYNIVLFLTTF) threads the bilayer. The Extracellular portion of the chain corresponds to 282–298 (QESLGMSNCVIDKHLDQ). Residues 299–322 (AMQVTETLGMTHCCINPVIYAFVG) traverse the membrane as a helical segment. The Cytoplasmic portion of the chain corresponds to 323–373 (EKFRRYLSIFFRKHIAKRLCKQCPVFYRETADRVSSTFTPSTGEQEVSVGL).

The protein belongs to the G-protein coupled receptor 1 family. As to quaternary structure, interacts with ARRB1. Interacts (via extracellular N-terminal region) with beta-defensin DEFB106A/DEFB106B; this interaction may preferentially require specific tyrosine sulfation on CCR2. Interacts with NUP85; the interaction is required for CCR2 clusters formation on the cell membrane and CCR2 signaling. In terms of processing, N-glycosylated. Post-translationally, sulfation increases the affinity for both monomeric and dimeric CCL2 with stronger binding to the monomeric form. Binding of sulfated CCR2 to CCL2 promotes conversion of CCL2 from dimer to monomer. As to expression, epressed in mature thymocytes. Detected in monocyte/macrophage cell lines, but not in nonhematopoietic cell lines.

The protein localises to the cell membrane. Key functional receptor for CCL2 but can also bind CCL7 and CCL12 chemokines. Its binding with CCL2 on monocytes and macrophages mediates chemotaxis and migration induction through the activation of the PI3K cascade, the small G protein Rac and lamellipodium protrusion. Also acts as a receptor for the beta-defensin DEFB106A/DEFB106B. Regulates the expression of T-cell inflammatory cytokines and T-cell differentiation, promoting the differentiation of T-cells into T-helper 17 cells (Th17) during inflammation. Facilitates the export of mature thymocytes by enhancing directional movement of thymocytes to sphingosine-1-phosphate stimulation and up-regulation of S1P1R expression; signals through the JAK-STAT pathway to regulate FOXO1 activity leading to an increased expression of S1P1R. Plays an important role in mediating peripheral nerve injury-induced neuropathic pain. Increases NMDA-mediated synaptic transmission in both dopamine D1 and D2 receptor-containing neurons, which may be caused by MAPK/ERK-dependent phosphorylation of GRIN2B/NMDAR2B. Mediates the recruitment of macrophages and monocytes to the injury site following brain injury. This Mus musculus (Mouse) protein is C-C chemokine receptor type 2 (Ccr2).